The primary structure comprises 564 residues: Dihydropyrimidinase-related protein 5 (564 aa).

Phosphothreonine occurs at positions 509 and 514. Phosphoserine is present on residues serine 532 and serine 538. The residue at position 559 (arginine 559) is an Omega-N-methylarginine.

It belongs to the metallo-dependent hydrolases superfamily. Hydantoinase/dihydropyrimidinase family. In terms of assembly, homotetramer, and heterotetramer with other DPYS-like proteins. Interacts with DPYSL2, DPYSL3 and DPYSL4. Interacts with MAP2 and TUBB3.

Its subcellular location is the cytoplasm. Its function is as follows. Involved in the negative regulation of dendrite outgrowth. In Homo sapiens (Human), this protein is Dihydropyrimidinase-related protein 5 (DPYSL5).